Consider the following 271-residue polypeptide: Phosphatidate cytidylyltransferase (271 aa).

The next 8 helical transmembrane spans lie at Leu-12–Ile-32, Phe-53–Pro-73, Leu-75–Leu-95, Leu-111–Trp-131, Gly-136–Gly-156, Trp-174–Tyr-194, Leu-199–Gly-219, and Ser-251–Pro-271.

It belongs to the CDS family.

It localises to the cell inner membrane. It carries out the reaction a 1,2-diacyl-sn-glycero-3-phosphate + CTP + H(+) = a CDP-1,2-diacyl-sn-glycerol + diphosphate. Its pathway is phospholipid metabolism; CDP-diacylglycerol biosynthesis; CDP-diacylglycerol from sn-glycerol 3-phosphate: step 3/3. This Pseudomonas aeruginosa (strain ATCC 15692 / DSM 22644 / CIP 104116 / JCM 14847 / LMG 12228 / 1C / PRS 101 / PAO1) protein is Phosphatidate cytidylyltransferase (cdsA).